A 332-amino-acid chain; its full sequence is GTP 3',8-cyclase (332 aa).

The Radical SAM core domain occupies 7-221; sequence QYERLHDYVR…FDLCKQAGLD (215 aa). Arg16 contributes to the GTP binding site. Cys23 and Cys27 together coordinate [4Fe-4S] cluster. An S-adenosyl-L-methionine-binding site is contributed by Tyr29. Cys30 is a [4Fe-4S] cluster binding site. Arg66 contacts GTP. Gly70 contacts S-adenosyl-L-methionine. Thr97 provides a ligand contact to GTP. Ser121 lines the S-adenosyl-L-methionine pocket. Position 158 (Lys158) interacts with GTP. An S-adenosyl-L-methionine-binding site is contributed by Met192. Cys256 and Cys259 together coordinate [4Fe-4S] cluster. 261 to 263 contacts GTP; sequence RLR. Cys273 is a binding site for [4Fe-4S] cluster.

The protein belongs to the radical SAM superfamily. MoaA family. Monomer and homodimer. [4Fe-4S] cluster is required as a cofactor.

The catalysed reaction is GTP + AH2 + S-adenosyl-L-methionine = (8S)-3',8-cyclo-7,8-dihydroguanosine 5'-triphosphate + 5'-deoxyadenosine + L-methionine + A + H(+). It functions in the pathway cofactor biosynthesis; molybdopterin biosynthesis. In terms of biological role, catalyzes the cyclization of GTP to (8S)-3',8-cyclo-7,8-dihydroguanosine 5'-triphosphate. The sequence is that of GTP 3',8-cyclase from Limosilactobacillus fermentum (strain NBRC 3956 / LMG 18251) (Lactobacillus fermentum).